Reading from the N-terminus, the 122-residue chain is Acidic phospholipase A2 4 (122 aa).

7 disulfide bridges follow: Cys-26/Cys-115, Cys-28/Cys-44, Cys-43/Cys-95, Cys-49/Cys-122, Cys-50/Cys-88, Cys-57/Cys-81, and Cys-75/Cys-86. Positions 27, 29, and 31 each coordinate Ca(2+). The active site involves His-47. Asp-48 is a binding site for Ca(2+). Asp-89 is a catalytic residue.

It belongs to the phospholipase A2 family. Group II subfamily. D49 sub-subfamily. It depends on Ca(2+) as a cofactor. As to expression, expressed by the venom gland.

It is found in the secreted. It carries out the reaction a 1,2-diacyl-sn-glycero-3-phosphocholine + H2O = a 1-acyl-sn-glycero-3-phosphocholine + a fatty acid + H(+). Snake venom phospholipase A2 (PLA2) that has high lipolytic activity. PLA2 catalyzes the calcium-dependent hydrolysis of the 2-acyl groups in 3-sn-phosphoglycerides. In Craspedocephalus gramineus (Bamboo pit viper), this protein is Acidic phospholipase A2 4.